The sequence spans 232 residues: Ubiquinone biosynthesis O-methyltransferase (232 aa).

Residues arginine 36, glycine 55, aspartate 76, and methionine 120 each coordinate S-adenosyl-L-methionine.

It belongs to the methyltransferase superfamily. UbiG/COQ3 family.

The enzyme catalyses a 3-demethylubiquinol + S-adenosyl-L-methionine = a ubiquinol + S-adenosyl-L-homocysteine + H(+). It catalyses the reaction a 3-(all-trans-polyprenyl)benzene-1,2-diol + S-adenosyl-L-methionine = a 2-methoxy-6-(all-trans-polyprenyl)phenol + S-adenosyl-L-homocysteine + H(+). Its pathway is cofactor biosynthesis; ubiquinone biosynthesis. Functionally, O-methyltransferase that catalyzes the 2 O-methylation steps in the ubiquinone biosynthetic pathway. The polypeptide is Ubiquinone biosynthesis O-methyltransferase (Burkholderia mallei (strain ATCC 23344)).